The primary structure comprises 306 residues: Pantothenate kinase (306 aa).

91–98 contacts ATP; that stretch reads GSVAVGKS.

It belongs to the prokaryotic pantothenate kinase family.

The protein localises to the cytoplasm. The enzyme catalyses (R)-pantothenate + ATP = (R)-4'-phosphopantothenate + ADP + H(+). It functions in the pathway cofactor biosynthesis; coenzyme A biosynthesis; CoA from (R)-pantothenate: step 1/5. The sequence is that of Pantothenate kinase from Streptococcus agalactiae serotype Ia (strain ATCC 27591 / A909 / CDC SS700).